The primary structure comprises 384 residues: Formate dehydrogenase, chloroplastic/mitochondrial (384 aa).

The transit peptide at 1-29 (MAMRQAAKATIRACSSSSSSGYFARRQFN) directs the protein to the chloroplast and mitochondrion. 2 residues coordinate substrate: isoleucine 128 and asparagine 152. Residues 207–208 (RI), aspartate 227, 262–266 (PLTEK), asparagine 288, aspartate 314, and 338–341 (HTSG) each bind NAD(+).

It belongs to the D-isomer specific 2-hydroxyacid dehydrogenase family. FDH subfamily. Homodimer.

The protein localises to the mitochondrion. Its subcellular location is the plastid. The protein resides in the chloroplast. The enzyme catalyses formate + NAD(+) = CO2 + NADH. Functionally, catalyzes the NAD(+)-dependent oxidation of formate to carbon dioxide. Involved in the cell stress response. This is Formate dehydrogenase, chloroplastic/mitochondrial (FDH1) from Arabidopsis thaliana (Mouse-ear cress).